Reading from the N-terminus, the 209-residue chain is V-type ATP synthase subunit D (209 aa).

It belongs to the V-ATPase D subunit family.

Produces ATP from ADP in the presence of a proton gradient across the membrane. This is V-type ATP synthase subunit D from Anaeromyxobacter sp. (strain K).